A 580-amino-acid chain; its full sequence is Arginine--tRNA ligase (580 aa).

The short motif at 127–137 is the 'HIGH' region element; the sequence is PNTHKELHVGH.

It belongs to the class-I aminoacyl-tRNA synthetase family. In terms of assembly, monomer.

The protein resides in the cytoplasm. The enzyme catalyses tRNA(Arg) + L-arginine + ATP = L-arginyl-tRNA(Arg) + AMP + diphosphate. This Bdellovibrio bacteriovorus (strain ATCC 15356 / DSM 50701 / NCIMB 9529 / HD100) protein is Arginine--tRNA ligase.